Consider the following 135-residue polypeptide: MSWPVLAAVAAGGALGALARAGLLAATPQHPATADWGTVLVNVLGCALIGVLMETLTRRPNPHPLLRPFLGVGVLGGFTTFSAAITDATDAFAAHQPGEALLAIAANLIGALLAVSAAAGATATLLDRAAQRKKT.

Helical transmembrane passes span 5 to 25, 36 to 56, 68 to 88, and 100 to 120; these read VLAAVAAGGALGALARAGLLA, WGTVLVNVLGCALIGVLMETL, PFLGVGVLGGFTTFSAAITDA, and ALLAIAANLIGALLAVSAAAG. Residues glycine 76 and threonine 79 each coordinate Na(+).

Belongs to the fluoride channel Fluc/FEX (TC 1.A.43) family.

It localises to the cell membrane. The enzyme catalyses fluoride(in) = fluoride(out). Its activity is regulated as follows. Na(+) is not transported, but it plays an essential structural role and its presence is essential for fluoride channel function. Fluoride-specific ion channel. Important for reducing fluoride concentration in the cell, thus reducing its toxicity. The sequence is that of Fluoride-specific ion channel FluC 2 from Thermobifida fusca (strain YX).